Consider the following 103-residue polypeptide: Small ribosomal subunit protein uS14c (103 aa).

This sequence belongs to the universal ribosomal protein uS14 family. Part of the 30S ribosomal subunit.

Its subcellular location is the plastid. It is found in the chloroplast. Binds 16S rRNA, required for the assembly of 30S particles. The chain is Small ribosomal subunit protein uS14c from Agrostis stolonifera (Creeping bentgrass).